Here is a 363-residue protein sequence, read N- to C-terminus: Isopentenyl-diphosphate delta-isomerase (363 aa).

A substrate-binding site is contributed by 7–8 (RK). FMN-binding positions include 71–73 (AMT), S101, and N130. Q160 is a binding site for substrate. E161 contributes to the Mg(2+) binding site. Residues K192, S217, T222, 270–272 (GIR), and 291–292 (AG) contribute to the FMN site.

The protein belongs to the IPP isomerase type 2 family. In terms of assembly, homooctamer. Dimer of tetramers. FMN is required as a cofactor. It depends on NADPH as a cofactor. Requires Mg(2+) as cofactor.

Its subcellular location is the cytoplasm. The catalysed reaction is isopentenyl diphosphate = dimethylallyl diphosphate. In terms of biological role, involved in the biosynthesis of isoprenoids. Catalyzes the 1,3-allylic rearrangement of the homoallylic substrate isopentenyl (IPP) to its allylic isomer, dimethylallyl diphosphate (DMAPP). This is Isopentenyl-diphosphate delta-isomerase from Symbiobacterium thermophilum (strain DSM 24528 / JCM 14929 / IAM 14863 / T).